Reading from the N-terminus, the 470-residue chain is Zinc finger CCCH domain-containing protein 7 (470 aa).

Residues 122-144 form a disordered region; sequence AYSKKESEKQSGQNNTSTASRNH. Polar residues predominate over residues 131-142; that stretch reads QSGQNNTSTASR. 5 C3H1-type zinc fingers span residues 240–269, 273–294, 295–321, 322–349, and 350–372; these read AKKK…HDPS, VCTK…HKVI, PERM…HVHV, NPIA…HSYN, and CPVF…HPKN. The span at 370 to 381 shows a compositional bias: basic residues; it reads PKNQSKGRKRKR. The tract at residues 370–389 is disordered; that stretch reads PKNQSKGRKRKRTNEPSQKN.

Its function is as follows. Possesses RNA-binding and ribonuclease activities in vitro. The protein is Zinc finger CCCH domain-containing protein 7 of Arabidopsis thaliana (Mouse-ear cress).